The chain runs to 277 residues: Shikimate dehydrogenase (NADP(+)) (277 aa).

Shikimate contacts are provided by residues 15–17 (SLS) and threonine 62. Residue lysine 66 is the Proton acceptor of the active site. Shikimate is bound by residues asparagine 87 and aspartate 102. NADP(+) contacts are provided by residues 127–131 (GAGGA), 151–156 (NRTVDK), and isoleucine 219. Tyrosine 221 is a binding site for shikimate. Position 242 (glycine 242) interacts with NADP(+).

Belongs to the shikimate dehydrogenase family. As to quaternary structure, homodimer.

The catalysed reaction is shikimate + NADP(+) = 3-dehydroshikimate + NADPH + H(+). Its pathway is metabolic intermediate biosynthesis; chorismate biosynthesis; chorismate from D-erythrose 4-phosphate and phosphoenolpyruvate: step 4/7. Involved in the biosynthesis of the chorismate, which leads to the biosynthesis of aromatic amino acids. Catalyzes the reversible NADPH linked reduction of 3-dehydroshikimate (DHSA) to yield shikimate (SA). The protein is Shikimate dehydrogenase (NADP(+)) of Bacillus cereus (strain ATCC 10987 / NRS 248).